The following is a 124-amino-acid chain: Ribonuclease pancreatic (124 aa).

Lys7 and Arg10 together coordinate substrate. The Proton acceptor role is filled by His12. Cystine bridges form between Cys26–Cys84, Cys40–Cys95, Cys58–Cys110, and Cys65–Cys72. Asn34 carries an N-linked (GlcNAc...) asparagine glycan. Residues Lys41–Thr45, Lys66, and Arg85 each bind substrate. Catalysis depends on His119, which acts as the Proton donor.

This sequence belongs to the pancreatic ribonuclease family. Monomer. Interacts with and forms tight 1:1 complexes with RNH1. Dimerization of two such complexes may occur. Interaction with RNH1 inhibits this protein. In terms of tissue distribution, pancreas.

It is found in the secreted. It carries out the reaction an [RNA] containing cytidine + H2O = an [RNA]-3'-cytidine-3'-phosphate + a 5'-hydroxy-ribonucleotide-3'-[RNA].. The catalysed reaction is an [RNA] containing uridine + H2O = an [RNA]-3'-uridine-3'-phosphate + a 5'-hydroxy-ribonucleotide-3'-[RNA].. Its function is as follows. Endonuclease that catalyzes the cleavage of RNA on the 3' side of pyrimidine nucleotides. Acts on single-stranded and double-stranded RNA. In Eudorcas thomsonii (Thomson's gazelle), this protein is Ribonuclease pancreatic (RNASE1).